A 206-amino-acid polypeptide reads, in one-letter code: Pyridoxine/pyridoxamine 5'-phosphate oxidase (206 aa).

FMN contacts are provided by residues 54–59 (RVVLLK), 69–70 (YT), arginine 75, lysine 76, and glutamine 98. Lysine 59 contacts substrate. Residues tyrosine 116, arginine 120, and serine 124 each coordinate substrate. FMN-binding positions include 133-134 (QS) and tryptophan 178. 184-186 (RLH) lines the substrate pocket. FMN is bound at residue arginine 188.

It belongs to the pyridoxamine 5'-phosphate oxidase family. In terms of assembly, homodimer. Requires FMN as cofactor.

It catalyses the reaction pyridoxamine 5'-phosphate + O2 + H2O = pyridoxal 5'-phosphate + H2O2 + NH4(+). The catalysed reaction is pyridoxine 5'-phosphate + O2 = pyridoxal 5'-phosphate + H2O2. Its pathway is cofactor metabolism; pyridoxal 5'-phosphate salvage; pyridoxal 5'-phosphate from pyridoxamine 5'-phosphate: step 1/1. It functions in the pathway cofactor metabolism; pyridoxal 5'-phosphate salvage; pyridoxal 5'-phosphate from pyridoxine 5'-phosphate: step 1/1. Functionally, catalyzes the oxidation of either pyridoxine 5'-phosphate (PNP) or pyridoxamine 5'-phosphate (PMP) into pyridoxal 5'-phosphate (PLP). This Anaplasma phagocytophilum (strain HZ) protein is Pyridoxine/pyridoxamine 5'-phosphate oxidase.